A 436-amino-acid polypeptide reads, in one-letter code: Trigger factor (436 aa).

The region spanning 163–248 (GDRVTIDFEG…VKKIEAAHLP (86 aa)) is the PPIase FKBP-type domain.

The protein belongs to the FKBP-type PPIase family. Tig subfamily.

The protein localises to the cytoplasm. It carries out the reaction [protein]-peptidylproline (omega=180) = [protein]-peptidylproline (omega=0). Involved in protein export. Acts as a chaperone by maintaining the newly synthesized protein in an open conformation. Functions as a peptidyl-prolyl cis-trans isomerase. The polypeptide is Trigger factor (Polaromonas naphthalenivorans (strain CJ2)).